We begin with the raw amino-acid sequence, 147 residues long: Putative fibroblast growth factor 1 (147 aa).

N25 serves as a coordination point for heparin. Positions 117 to 133 are heparin-binding; it reads KKNGKMKRGPRTHIGQK.

It belongs to the heparin-binding growth factors family.

The protein localises to the secreted. The protein resides in the cytoplasm. It localises to the cell cortex. It is found in the cytosol. Its subcellular location is the nucleus. Functionally, plays an important role in the regulation of cell survival, cell division, angiogenesis, cell differentiation and cell migration. Functions as a potent mitogen in vitro. Acts as a ligand for FGFR1 and integrins. Binds to FGFR1 in the presence of heparin leading to FGFR1 dimerization and activation via sequential autophosphorylation on tyrosine residues which act as docking sites for interacting proteins, leading to the activation of several signaling cascades. Binds to integrins. Its binding to integrins and subsequent ternary complex formation with integrins and FGFR1 are essential for FGF1 signaling. This chain is Putative fibroblast growth factor 1 (fgf1), found in Danio rerio (Zebrafish).